Here is a 940-residue protein sequence, read N- to C-terminus: MSCWTLVQQDFLEAPSVDALKTSLESKNDYVKISAMKTILRVVINGDSLPSILMHVIRFVMPSRNKELKKLLYYYWEVCPKYNNDGTMKQEMILACNSFRNDLQHPNEFIRGATLRFLCKLKEPELLDPLIPTVRQCLEHRHAYVRKNAILAVFSIYQVSNHLIPDAASLAEDFLAAESEGTCKRNALIVLFTIDPEKAKAWLLANFEQIPSLNASSLLVIIEFIRKVVLTKADGLEKLRFQSLLVSLTATNNSSVVFEAATSVINVFPDAESLKLAASRLLALADREADNNAKLIMLDRISQLAARDKSILEDLITDVIPFLSSSDFDVCEKAISIIMGLVSSRNVEDILNHFQKELTKSNGETEKDDGRRRALTKAIHSCAINFPHTAATAIQYLLSHISDFQSKSASSVLSFIKEVMEKFPDLRSSNITKLLLSLKELRAGKIFRGVIWIAGEYCLTEDDIRVAWKSIRASLGEVPILASEEQLLKDVSNVPEDDLLIDISAPASTSRKVLPDGTYATESAVTSEALSAARLEAVKASKKPPLRTQILSGDYYLAAVLASALTKLVMRFARLSFDKERLNALKAEACLIMTSIIRVGQSKFVKYTIDDDSVERIMNCIRAIYSFEELPEFQTVFLDDMRKAFSSLVAQSDKRQKEADLLVNGSDAVQADELLNIRQFQRVIEEKQDLNFESDIIQATNDGMVVEDLASKLDHIVQLAGFTDPVYCEAYVKIQQFDIILDILLVNRTDTTLQNLSVDLATLGDLKVVERPPPMNLGPHAFKSVQATVKVSSTESAVIFGNIVYGGKASDEDKIVVLNGIPVNIIDYIKPAFIPESQFRSMWTEFEWENKVDISSNEDISLYDFLHKIMKKTNMNCLTPDASLRGDCGFLSANLYACSIFGEDALMSLSVEKSVSGPISGHVRIRSKTQGIALSLGAFV.

HEAT repeat units lie at residues 11–48 (FLEA…NGDS), 90–125 (QEMI…KEPE), 126–162 (LLDP…VSNH), and 310–347 (SILE…SRNV).

Oligomeric complex that consists of at least the alpha, beta, beta', gamma, delta, epsilon and zeta subunits.

Its subcellular location is the cytoplasm. It is found in the golgi apparatus membrane. It localises to the cytoplasmic vesicle. The protein resides in the COPI-coated vesicle membrane. In terms of biological role, the coatomer is a cytosolic protein complex that binds to dilysine motifs and reversibly associates with Golgi non-clathrin-coated vesicles, which further mediate biosynthetic protein transport from the ER, via the Golgi up to the trans Golgi network. Coatomer complex is required for budding from Golgi membranes, and is essential for the retrograde Golgi-to-ER transport of dilysine-tagged proteins. The polypeptide is Coatomer subunit beta (sec26) (Schizosaccharomyces pombe (strain 972 / ATCC 24843) (Fission yeast)).